A 2292-amino-acid chain; its full sequence is Protein Ycf2 (2292 aa).

1644–1651 (GSIGTGRS) contacts ATP.

The protein belongs to the Ycf2 family.

Its subcellular location is the plastid. It localises to the chloroplast stroma. Its function is as follows. Probable ATPase of unknown function. Its presence in a non-photosynthetic plant (Epifagus virginiana) and experiments in tobacco indicate that it has an essential function which is probably not related to photosynthesis. This Morus indica (Mulberry) protein is Protein Ycf2.